The chain runs to 84 residues: UPF0248 protein PF1300 (84 aa).

This sequence belongs to the UPF0248 family.

The chain is UPF0248 protein PF1300 from Pyrococcus furiosus (strain ATCC 43587 / DSM 3638 / JCM 8422 / Vc1).